Here is a 252-residue protein sequence, read N- to C-terminus: MRILVSNDDGYNAPGLEALVEALSGLGELTVVAPETNHSGASNSLTLNRPLTVRTAANGFIYVNGTPSDCVHVALTGLMDARPDLVVSGINNGANMGDDTLYSGTVAAASEGYLFGIPSIAFSLIEKGWQHIESAARAARQVVERQIAQPLAAPVLLNVNIPNRRYEDMKGYAVTRLGKRHPSEPVVRTTTPYGDTVYWVGPVGLAADATPGTDFHATAQGQVSVTPLRLDLTQHSQLDDVRNWAEPLCVNA.

A divalent metal cation contacts are provided by aspartate 8, aspartate 9, serine 39, and asparagine 91.

Belongs to the SurE nucleotidase family. Requires a divalent metal cation as cofactor.

The protein localises to the cytoplasm. It catalyses the reaction a ribonucleoside 5'-phosphate + H2O = a ribonucleoside + phosphate. In terms of biological role, nucleotidase that shows phosphatase activity on nucleoside 5'-monophosphates. This Bordetella pertussis (strain Tohama I / ATCC BAA-589 / NCTC 13251) protein is 5'-nucleotidase SurE.